The following is a 255-amino-acid chain: 1-(5-phosphoribosyl)-5-[(5-phosphoribosylamino)methylideneamino] imidazole-4-carboxamide isomerase (255 aa).

D8 acts as the Proton acceptor in catalysis. Catalysis depends on D129, which acts as the Proton donor.

The protein belongs to the HisA/HisF family.

The protein resides in the cytoplasm. The catalysed reaction is 1-(5-phospho-beta-D-ribosyl)-5-[(5-phospho-beta-D-ribosylamino)methylideneamino]imidazole-4-carboxamide = 5-[(5-phospho-1-deoxy-D-ribulos-1-ylimino)methylamino]-1-(5-phospho-beta-D-ribosyl)imidazole-4-carboxamide. The protein operates within amino-acid biosynthesis; L-histidine biosynthesis; L-histidine from 5-phospho-alpha-D-ribose 1-diphosphate: step 4/9. The polypeptide is 1-(5-phosphoribosyl)-5-[(5-phosphoribosylamino)methylideneamino] imidazole-4-carboxamide isomerase (Prochlorococcus marinus (strain MIT 9313)).